The sequence spans 155 residues: Transcription antitermination protein NusB (155 aa).

It belongs to the NusB family.

Involved in transcription antitermination. Required for transcription of ribosomal RNA (rRNA) genes. Binds specifically to the boxA antiterminator sequence of the ribosomal RNA (rrn) operons. The sequence is that of Transcription antitermination protein NusB from Azoarcus sp. (strain BH72).